A 2359-amino-acid chain; its full sequence is Nonribosomal peptide synthetase anaPS (2359 aa).

The tract at residues 239–633 (RNATVHGDTL…VRRKDNQVKI (395 aa)) is adenylation 1. The 77-residue stretch at 770–846 (AAQGKGEEAI…ELASAANLSN (77 aa)) folds into the Carrier 1 domain. Residue S807 is modified to O-(pantetheine 4'-phosphoryl)serine. A condensation 1 region spans residues 883–1292 (EDIYPSTALQ…VGDLPRMSRQ (410 aa)). Residues 1321 to 1709 (LEYPNACAVS…GRKDSQIKIR (389 aa)) form an adenylation 2 region. One can recognise a Carrier 2 domain in the interval 1842–1918 (APSNSVEQDL…AIANKIGVVS (77 aa)). O-(pantetheine 4'-phosphoryl)serine is present on S1879. Positions 1936-2356 (LTPIQEFFFE…LVKCLEDLAS (421 aa)) are condensation 2.

Belongs to the NRP synthetase family.

It catalyses the reaction anthranilate + L-tryptophan + 2 ATP = (R)-benzodiazepinedione + 2 AMP + 2 diphosphate + H(+). It functions in the pathway alkaloid biosynthesis. In terms of biological role, nonribosomal peptide synthetase; part of the gene cluster that mediates the biosynthesis of the prenylated pyrroloindoline diketopiperazine acetylaszonalenin. The first step in the pathway is the formation of (R)-benzodiazepinedione by condensation of tryptophan and anthranilic acid catalyzed by the non-ribosomal peptide synthetase anaPS. The prenyltransferase anaPT then converts (R)-benzodiazepinedione to aszonalenin in the presence of dimethylallyl diphosphate (DMAPP) via C3-prenylation. The last step in the biosynthesis of acetylaszonalenin via acetylation of aszonalenin at position N1 catalyzed by anaAT. The polypeptide is Nonribosomal peptide synthetase anaPS (Neosartorya fischeri (strain ATCC 1020 / DSM 3700 / CBS 544.65 / FGSC A1164 / JCM 1740 / NRRL 181 / WB 181) (Aspergillus fischerianus)).